Here is a 200-residue protein sequence, read N- to C-terminus: ATP synthase subunit s, mitochondrial (200 aa).

The transit peptide at 1–25 (MMMFGKISRQLFSLKKIPWSCDSRY) directs the protein to the mitochondrion. Residues 1 to 61 (MMMFGKISRQ…SEWLLRCGAK (61 aa)) form an N-terminal domain region. Residue glycine 59 participates in Mg(2+) binding. LRR repeat units follow at residues 62–87 (VRYC…RYKI), 88–116 (QAID…RITL), 117–141 (CRCH…KSLL), and 142–173 (ELEI…LSDL). Threonine 93 serves as a coordination point for Mg(2+).

Belongs to the ATP synthase subunit s family. Homotetramer. Associates with ATP synthase.

It localises to the mitochondrion. The protein localises to the mitochondrion inner membrane. Involved in regulation of mitochondrial membrane ATP synthase. Necessary for H(+) conduction of ATP synthase. Facilitates energy-driven catalysis of ATP synthesis by blocking a proton leak through an alternative proton exit pathway. The protein is ATP synthase subunit s, mitochondrial of Rattus norvegicus (Rat).